Consider the following 300-residue polypeptide: Cathepsin B-like CP2 (300 aa).

Residues 1 to 19 (MKLFLLAAAAFSAPALTVS) form the signal peptide. Intrachain disulfides connect Cys-88/Cys-115, Cys-98/Cys-141, and Cys-134/Cys-177. Cys-101 is an active-site residue. Catalysis depends on residues His-245 and Asn-266.

This sequence belongs to the peptidase C1 family.

Its subcellular location is the vacuole. Its function is as follows. Thiol protease which is required for parasite excystation and invasion of the proximal small intestine of the human host. This chain is Cathepsin B-like CP2 (CP2), found in Giardia intestinalis (Giardia lamblia).